The following is a 339-amino-acid chain: MTKIAVLGNGSWGSVLGSMLADNGNDVVLYGNIESVNDEINATHTNSHYMKDWKLNENTRATGDLEDALDGAEVVLFVLPTKAVRIVAKNVREILDKSGAKPLLVTATKGIEPGTKKLISEILTDEIYPNDEDKIVAISGPSHAENVAQKDLTAIACASTNEENAKKVQKLFSNDYVRFYTNDDLVGVEVGGAVKNVIAIAAGILVGQGYGDDAKAALMTRGLAEITRLGVNYFGAKPMTFSGLSGIGDLIVTCTSVNSRNWRAGKQIGEGKSLDYVLKNMGQVVEGATTVKAVHELCEEKNIDMPISEAIYRVLYEGTDVETEIKKMMGRAPKPEIRL.

NADPH contacts are provided by Ser-11, Trp-12, and Lys-109. Sn-glycerol 3-phosphate contacts are provided by Lys-109, Gly-140, and Ser-142. Ala-144 provides a ligand contact to NADPH. Lys-195, Asp-249, Ser-259, Arg-260, and Asn-261 together coordinate sn-glycerol 3-phosphate. The active-site Proton acceptor is the Lys-195. Arg-260 contacts NADPH. 2 residues coordinate NADPH: Val-284 and Glu-286.

It belongs to the NAD-dependent glycerol-3-phosphate dehydrogenase family.

The protein resides in the cytoplasm. It catalyses the reaction sn-glycerol 3-phosphate + NAD(+) = dihydroxyacetone phosphate + NADH + H(+). The enzyme catalyses sn-glycerol 3-phosphate + NADP(+) = dihydroxyacetone phosphate + NADPH + H(+). It functions in the pathway membrane lipid metabolism; glycerophospholipid metabolism. Its function is as follows. Catalyzes the reduction of the glycolytic intermediate dihydroxyacetone phosphate (DHAP) to sn-glycerol 3-phosphate (G3P), the key precursor for phospholipid synthesis. In Lactobacillus acidophilus (strain ATCC 700396 / NCK56 / N2 / NCFM), this protein is Glycerol-3-phosphate dehydrogenase [NAD(P)+].